The primary structure comprises 154 residues: SsrA-binding protein (154 aa).

It belongs to the SmpB family.

It is found in the cytoplasm. Required for rescue of stalled ribosomes mediated by trans-translation. Binds to transfer-messenger RNA (tmRNA), required for stable association of tmRNA with ribosomes. tmRNA and SmpB together mimic tRNA shape, replacing the anticodon stem-loop with SmpB. tmRNA is encoded by the ssrA gene; the 2 termini fold to resemble tRNA(Ala) and it encodes a 'tag peptide', a short internal open reading frame. During trans-translation Ala-aminoacylated tmRNA acts like a tRNA, entering the A-site of stalled ribosomes, displacing the stalled mRNA. The ribosome then switches to translate the ORF on the tmRNA; the nascent peptide is terminated with the 'tag peptide' encoded by the tmRNA and targeted for degradation. The ribosome is freed to recommence translation, which seems to be the essential function of trans-translation. The polypeptide is SsrA-binding protein (Methylobacillus flagellatus (strain ATCC 51484 / DSM 6875 / VKM B-1610 / KT)).